Consider the following 605-residue polypeptide: Elongation factor 4 (605 aa).

Residues 9–192 form the tr-type G domain; sequence HHIRNFCIIA…AIVKRVPAPS (184 aa). Residues 21-26 and 139-142 contribute to the GTP site; these read DHGKST and NKID.

The protein belongs to the TRAFAC class translation factor GTPase superfamily. Classic translation factor GTPase family. LepA subfamily.

It localises to the cell inner membrane. It catalyses the reaction GTP + H2O = GDP + phosphate + H(+). In terms of biological role, required for accurate and efficient protein synthesis under certain stress conditions. May act as a fidelity factor of the translation reaction, by catalyzing a one-codon backward translocation of tRNAs on improperly translocated ribosomes. Back-translocation proceeds from a post-translocation (POST) complex to a pre-translocation (PRE) complex, thus giving elongation factor G a second chance to translocate the tRNAs correctly. Binds to ribosomes in a GTP-dependent manner. The chain is Elongation factor 4 from Chlorobium phaeobacteroides (strain DSM 266 / SMG 266 / 2430).